A 243-amino-acid polypeptide reads, in one-letter code: tRNA (guanine-N(1)-)-methyltransferase (243 aa).

S-adenosyl-L-methionine contacts are provided by residues Gly-108 and 127 to 132 (LGDFVL).

The protein belongs to the RNA methyltransferase TrmD family. As to quaternary structure, homodimer.

Its subcellular location is the cytoplasm. The enzyme catalyses guanosine(37) in tRNA + S-adenosyl-L-methionine = N(1)-methylguanosine(37) in tRNA + S-adenosyl-L-homocysteine + H(+). In terms of biological role, specifically methylates guanosine-37 in various tRNAs. This Streptococcus equi subsp. equi (strain 4047) protein is tRNA (guanine-N(1)-)-methyltransferase.